A 712-amino-acid polypeptide reads, in one-letter code: Ribosomal RNA large subunit methyltransferase K/L (712 aa).

Residues 42–153 (QALRIVMWSR…KGRASLSIDL (112 aa)) form the THUMP domain.

It belongs to the methyltransferase superfamily. RlmKL family.

Its subcellular location is the cytoplasm. The catalysed reaction is guanosine(2445) in 23S rRNA + S-adenosyl-L-methionine = N(2)-methylguanosine(2445) in 23S rRNA + S-adenosyl-L-homocysteine + H(+). It catalyses the reaction guanosine(2069) in 23S rRNA + S-adenosyl-L-methionine = N(2)-methylguanosine(2069) in 23S rRNA + S-adenosyl-L-homocysteine + H(+). In terms of biological role, specifically methylates the guanine in position 2445 (m2G2445) and the guanine in position 2069 (m7G2069) of 23S rRNA. The chain is Ribosomal RNA large subunit methyltransferase K/L from Stenotrophomonas maltophilia (strain K279a).